The chain runs to 207 residues: Alpha-1-acid glycoprotein 8 (207 aa).

The signal sequence occupies residues 1–18 (MALHTVLIMLSLLPMLEA). Asn25, Asn34, Asn76, Asn94, and Asn104 each carry an N-linked (GlcNAc...) asparagine glycan. Cys91 and Cys184 are disulfide-bonded.

The protein belongs to the calycin superfamily. Lipocalin family. As to expression, expressed by the liver and secreted in plasma.

The protein localises to the secreted. Functions as a transport protein in the blood stream. Binds various ligands in the interior of its beta-barrel domain. Appears to function in modulating the activity of the immune system during the acute-phase reaction. The chain is Alpha-1-acid glycoprotein 8 (Orm8) from Mus caroli (Ryukyu mouse).